Consider the following 72-residue polypeptide: uncharacterized protein (72 aa).

This is an uncharacterized protein from Acidianus filamentous virus 2 (isolate Italy/Pozzuoli) (AFV-2).